Reading from the N-terminus, the 1242-residue chain is DNA-directed RNA polymerase RPB2 homolog (1242 aa).

A C4-type zinc finger spans residues 1180-1201 (CRNCGEPAIYNASHPIYKCMNC).

Belongs to the RNA polymerase beta chain family. In terms of assembly, part of the viral DNA-directed RNA polymerase that consists of 8 polII-like subunits (RPB1, RPB2, RPB3, RPB5, RPB6, RPB7, RPB9, RPB10), a capping enzyme and a termination factor.

The protein localises to the host cytoplasm. It localises to the virion. The catalysed reaction is RNA(n) + a ribonucleoside 5'-triphosphate = RNA(n+1) + diphosphate. Functionally, catalytic component of the DNA-directed RNA polymerase (RNAP) that catalyzes the transcription in the cytoplasm of viral DNA into RNA using the four ribonucleoside triphosphates as substrates. Forms the polymerase active center together with RPB1. Part of the core element with the central large cleft, the clamp element that moves to open and close the cleft and the jaws that are thought to grab the incoming DNA template. This chain is DNA-directed RNA polymerase RPB2 homolog, found in Ornithodoros (relapsing fever ticks).